The chain runs to 464 residues: Opioid growth factor receptor-like protein 1 (464 aa).

2 disordered regions span residues 1 to 91 (MGNL…AKPK) and 309 to 464 (ENFI…TSSG). A compositionally biased stretch (basic and acidic residues) spans 43 to 59 (QQHDEPEQPKQPPERAG). Residues 74 to 86 (AAGAEQGGESTEG) are compositionally biased toward low complexity. The segment covering 316–325 (PKKELPERSK) has biased composition (basic and acidic residues). A compositionally biased stretch (polar residues) spans 327 to 342 (QKTPTLPASGSNGQTS). Basic and acidic residues-rich tracts occupy residues 363–382 (SVEE…DKPS), 390–400 (PKPRNTEKDSA), and 425–439 (SEKD…KDSE). A compositionally biased stretch (polar residues) spans 452-464 (AQQNATNPQTSSG).

It belongs to the opioid growth factor receptor family.

This chain is Opioid growth factor receptor-like protein 1 (Ogfrl1), found in Mus musculus (Mouse).